The primary structure comprises 266 residues: Cell division protein FtsQ (266 aa).

The Cytoplasmic segment spans residues 1–31 (MRQKTSSNKKKQKNTNNISLRRKLGLMYKKA). Residues 32–52 (ILGLKIVLMIFVCLFVFTKYF) traverse the membrane as a helical segment. Topologically, residues 53 to 266 (TSIKTYLITN…DRNKYYIQKY (214 aa)) are periplasmic. One can recognise a POTRA domain in the interval 72–140 (FRLENVIIEG…NTVYIKLFER (69 aa)).

This sequence belongs to the FtsQ/DivIB family. FtsQ subfamily.

It localises to the cell inner membrane. Essential cell division protein. In Rickettsia typhi (strain ATCC VR-144 / Wilmington), this protein is Cell division protein FtsQ.